Consider the following 342-residue polypeptide: MAVTAAQVKELREKTGAGIMDAKRALVETDGNMEAAAELLREKGIAKAAKKADRVAAEGLTGIAVNGNVAALVELNSETDFVAKNDQFVALVKETAELLAASKPANNEEALAIKTASGVTLEQELVQATATIGEKITFRRFVVIEKTDAQHFGAYQHNGGKIGVISVIEGADETLAKQVSMHIAAMNPTVLSADELDSEFVKAELAQMNHKIDEDNASRVLVNKPELPHHEYGSKSQLTEEVLAAAKASFEEELKAEGKPEKIWDKILPGKMAKFIVDNTKVDQQFALLAQLYIMDDSKTVEAFLESKGAKAIAFTRFEVGEGIEKAETDFAAEVEAAKAGL.

The tract at residues 79 to 82 (TDFV) is involved in Mg(2+) ion dislocation from EF-Tu.

This sequence belongs to the EF-Ts family.

The protein localises to the cytoplasm. Functionally, associates with the EF-Tu.GDP complex and induces the exchange of GDP to GTP. It remains bound to the aminoacyl-tRNA.EF-Tu.GTP complex up to the GTP hydrolysis stage on the ribosome. The sequence is that of Elongation factor Ts from Lactococcus lactis subsp. cremoris (strain MG1363).